The primary structure comprises 100 residues: Carboxysome shell vertex protein CcmL (100 aa).

Residues 1–83 enclose the BMV domain; it reads MQLAKVLGTV…LDAMVVGIID (83 aa).

This sequence belongs to the CcmL/EutN family. CcmL subfamily. In terms of assembly, homopentamer. Interacts with full-length CcmM.

The protein localises to the carboxysome. Its function is as follows. Probably forms vertices in the carboxysome, a polyhedral inclusion where RuBisCO (ribulose bisphosphate carboxylase, rbcL-rbcS) is sequestered. Has been modeled to induce curvature upon insertion into an otherwise flat hexagonal molecular layer of CcmK subunits. The polypeptide is Carboxysome shell vertex protein CcmL (Synechocystis sp. (strain ATCC 27184 / PCC 6803 / Kazusa)).